Consider the following 159-residue polypeptide: Eukaryotic translation initiation factor 5A (159 aa).

At lysine 51 the chain carries Hypusine.

This sequence belongs to the eIF-5A family. In terms of processing, lys-51 undergoes hypusination, a unique post-translational modification that consists in the addition of a butylamino group from spermidine to lysine side chain, leading to the formation of the unusual amino acid hypusine. eIF-5As are the only known proteins to undergo this modification, which is essential for their function.

The protein localises to the cytoplasm. In terms of biological role, translation factor that promotes translation elongation and termination, particularly upon ribosome stalling at specific amino acid sequence contexts. Binds between the exit (E) and peptidyl (P) site of the ribosome and promotes rescue of stalled ribosome: specifically required for efficient translation of polyproline-containing peptides as well as other motifs that stall the ribosome. Acts as a ribosome quality control (RQC) cofactor by joining the RQC complex to facilitate peptidyl transfer during CAT tailing step. Functions as a regulator of autophagy. The chain is Eukaryotic translation initiation factor 5A from Drosophila melanogaster (Fruit fly).